The sequence spans 122 residues: Large ribosomal subunit protein uL14 (122 aa).

Belongs to the universal ribosomal protein uL14 family. In terms of assembly, part of the 50S ribosomal subunit. Forms a cluster with proteins L3 and L19. In the 70S ribosome, L14 and L19 interact and together make contacts with the 16S rRNA in bridges B5 and B8.

Its function is as follows. Binds to 23S rRNA. Forms part of two intersubunit bridges in the 70S ribosome. This chain is Large ribosomal subunit protein uL14, found in Anaeromyxobacter sp. (strain Fw109-5).